A 120-amino-acid chain; its full sequence is MITKADKNATRKKRHARVRAKLTGTAERPRLNVFRSNQHIYAQVIDDVKGVTLVSASTLDKDLALNGTGNIEAATKVGELVAKRAVEKGVKEVVFDRGGYLYHGRVKALAEAAREAGLQF.

It belongs to the universal ribosomal protein uL18 family. As to quaternary structure, part of the 50S ribosomal subunit; part of the 5S rRNA/L5/L18/L25 subcomplex. Contacts the 5S and 23S rRNAs.

Functionally, this is one of the proteins that bind and probably mediate the attachment of the 5S RNA into the large ribosomal subunit, where it forms part of the central protuberance. In Bacillus cytotoxicus (strain DSM 22905 / CIP 110041 / 391-98 / NVH 391-98), this protein is Large ribosomal subunit protein uL18.